We begin with the raw amino-acid sequence, 72 residues long: NAD(P)H-quinone oxidoreductase subunit O (72 aa).

The protein belongs to the complex I NdhO subunit family. In terms of assembly, NDH-1 can be composed of about 15 different subunits; different subcomplexes with different compositions have been identified which probably have different functions.

Its subcellular location is the cellular thylakoid membrane. The enzyme catalyses a plastoquinone + NADH + (n+1) H(+)(in) = a plastoquinol + NAD(+) + n H(+)(out). It carries out the reaction a plastoquinone + NADPH + (n+1) H(+)(in) = a plastoquinol + NADP(+) + n H(+)(out). Its function is as follows. NDH-1 shuttles electrons from an unknown electron donor, via FMN and iron-sulfur (Fe-S) centers, to quinones in the respiratory and/or the photosynthetic chain. The immediate electron acceptor for the enzyme in this species is believed to be plastoquinone. Couples the redox reaction to proton translocation, and thus conserves the redox energy in a proton gradient. Cyanobacterial NDH-1 also plays a role in inorganic carbon-concentration. The sequence is that of NAD(P)H-quinone oxidoreductase subunit O from Synechococcus elongatus (strain ATCC 33912 / PCC 7942 / FACHB-805) (Anacystis nidulans R2).